We begin with the raw amino-acid sequence, 294 residues long: Flavin-dependent thymidylate synthase (294 aa).

The region spanning 27 to 250 is the ThyX domain; it reads GFIRVIDYMG…PFTYEAFEEY (224 aa). FAD is bound by residues Thr-73, 96–98, and Glu-104; that span reads RHR. Residues 93 to 96, 104 to 108, and Arg-189 each bind dUMP; these read QWIR and EYSAR. The ThyX motif motif lies at 96–106; that stretch reads RHRTASVNEYS. FAD-binding positions include 205 to 207 and His-211; that span reads NLH. Arg-216 is a dUMP binding site. The Involved in ionization of N3 of dUMP, leading to its activation role is filled by Arg-216.

This sequence belongs to the thymidylate synthase ThyX family. In terms of assembly, homotetramer. FAD is required as a cofactor.

It catalyses the reaction dUMP + (6R)-5,10-methylene-5,6,7,8-tetrahydrofolate + NADPH + H(+) = dTMP + (6S)-5,6,7,8-tetrahydrofolate + NADP(+). It functions in the pathway pyrimidine metabolism; dTTP biosynthesis. Catalyzes the reductive methylation of 2'-deoxyuridine-5'-monophosphate (dUMP) to 2'-deoxythymidine-5'-monophosphate (dTMP) while utilizing 5,10-methylenetetrahydrofolate (mTHF) as the methyl donor, and NADPH and FADH(2) as the reductant. In Rickettsia bellii (strain RML369-C), this protein is Flavin-dependent thymidylate synthase.